The primary structure comprises 332 residues: D-amino acid oxidase (332 aa).

FAD-binding residues include Ala-8, Gly-9, Ile-10, Thr-39, Thr-40, Ala-45, Gly-46, Leu-47, Val-161, and Ser-180. Tyr-218 and Arg-274 together coordinate D-proline. D-serine is bound by residues Tyr-218 and Arg-274. Residues Arg-274, Gly-305, Gly-306, Gly-308, and Thr-310 each coordinate FAD. Residue Gly-306 coordinates D-proline. Gly-306 is a D-serine binding site. A Microbody targeting signal motif is present at residues 330–332 (AKL).

The protein belongs to the DAMOX/DASOX family. Requires FAD as cofactor.

It localises to the peroxisome matrix. It carries out the reaction a D-alpha-amino acid + O2 + H2O = a 2-oxocarboxylate + H2O2 + NH4(+). The catalysed reaction is D-alanine + O2 + H2O = pyruvate + H2O2 + NH4(+). The enzyme catalyses D-arginine + O2 + H2O = 5-guanidino-2-oxopentanoate + H2O2 + NH4(+). It catalyses the reaction D-asparagine + O2 + H2O = 2-oxosuccinamate + H2O2 + NH4(+). It carries out the reaction D-cysteine + O2 + H2O = 2-oxo-3-sulfanylpropanoate + H2O2 + NH4(+). The catalysed reaction is D-glutamine + O2 + H2O = 2-oxoglutaramate + H2O2 + NH4(+). The enzyme catalyses D-isoleucine + O2 + H2O = (R)-3-methyl-2-oxopentanoate + H2O2 + NH4(+). It catalyses the reaction D-leucine + O2 + H2O = 4-methyl-2-oxopentanoate + H2O2 + NH4(+). It carries out the reaction D-lysine + O2 + H2O = 6-amino-2-oxohexanoate + H2O2 + NH4(+). The catalysed reaction is D-methionine + O2 + H2O = 4-methylsulfanyl-2-oxobutanoate + H2O2 + NH4(+). The enzyme catalyses D-phenylalanine + O2 + H2O = 3-phenylpyruvate + H2O2 + NH4(+). It catalyses the reaction D-proline + O2 = 1-pyrroline-2-carboxylate + H2O2. It carries out the reaction D-valine + O2 + H2O = 3-methyl-2-oxobutanoate + H2O2 + NH4(+). The catalysed reaction is D-histidine + O2 + H2O = 3-(imidazol-5-yl)pyruvate + H2O2 + NH4(+). The enzyme catalyses D-tyrosine + O2 + H2O = 3-(4-hydroxyphenyl)pyruvate + H2O2 + NH4(+). It catalyses the reaction D-serine + O2 + H2O = 3-hydroxypyruvate + H2O2 + NH4(+). It carries out the reaction D-threonine + O2 + H2O = (S)-3-hydroxy-2-oxobutanoate + H2O2 + NH4(+). The catalysed reaction is D-tryptophan + O2 + H2O = indole-3-pyruvate + H2O2 + NH4(+). Catalyzes the oxidative deamination of D-amino acids with broad substrate specificity. Could be responsible for the degradation of diet-derived D-alanine in the intestine. Maintains the asexual state of worms and represses early ovarian development. Following sexual induction, the enzyme is required for differentiation of oogonia into oocytes in the developing ovaries. The polypeptide is D-amino acid oxidase (Dugesia ryukyuensis (Freshwater planarian flatworm)).